A 61-amino-acid polypeptide reads, in one-letter code: Small ribosomal subunit protein uS14B (61 aa).

Zn(2+) is bound by residues Cys24, Cys27, Cys40, and Cys43.

This sequence belongs to the universal ribosomal protein uS14 family. Zinc-binding uS14 subfamily. Part of the 30S ribosomal subunit. Contacts proteins S3 and S10. Zn(2+) serves as cofactor.

Its function is as follows. Binds 16S rRNA, required for the assembly of 30S particles and may also be responsible for determining the conformation of the 16S rRNA at the A site. This is Small ribosomal subunit protein uS14B from Streptomyces avermitilis (strain ATCC 31267 / DSM 46492 / JCM 5070 / NBRC 14893 / NCIMB 12804 / NRRL 8165 / MA-4680).